The primary structure comprises 3371 residues: Abnormal spindle-like microcephaly-associated protein homolog (3371 aa).

Residues serine 212, serine 215, serine 300, serine 325, and serine 540 each carry the phosphoserine modification. The tract at residues arginine 536–serine 559 is disordered. A Calponin-homology (CH) 1 domain is found at lysine 852 to glutamine 988. Positions valine 989–threonine 1014 form a coiled coil. Residue serine 1035 is modified to Phosphoserine. In terms of domain architecture, Calponin-homology (CH) 2 spans serine 1042 to leucine 1193. IQ domains are found at residues glutamate 1198–alanine 1227, glutamate 1396–glutamine 1427, lysine 1469–serine 1500, threonine 1564–lysine 1593, isoleucine 1587–lysine 1616, leucine 1610–glutamine 1639, arginine 1644–serine 1673, glutamine 1667–glutamine 1698, valine 1717–lysine 1746, glutamine 1740–lysine 1769, threonine 1790–lysine 1819, glutamate 1813–glutamine 1844, leucine 1863–glutamine 1894, glutamine 1886–glutamine 1917, threonine 1936–threonine 1965, methionine 1959–glutamine 1990, valine 2009–lysine 2040, methionine 2032–glutamine 2063, isoleucine 2082–glutamine 2113, methionine 2105–threonine 2134, leucine 2155–glutamine 2186, leucine 2227–glutamine 2258, methionine 2250–glutamine 2281, glutamine 2300–glutamine 2331, methionine 2323–glutamine 2354, methionine 2396–glutamine 2427, tryptophan 2446–glutamine 2477, arginine 2539–glutamine 2570, arginine 2580–arginine 2609, methionine 2603–glutamine 2634, isoleucine 2653–alanine 2682, glutamine 2729–serine 2760, glutamine 2751–threonine 2780, isoleucine 2824–lysine 2853, leucine 2847–alanine 2878, glutamate 2869–glutamine 2900, arginine 2944–threonine 2973, leucine 2994–histidine 3025, histidine 3096–lysine 3125, and phenylalanine 3119–arginine 3150.

It localises to the cytoplasm. The protein resides in the cytoskeleton. The protein localises to the spindle. It is found in the nucleus. Functionally, probable role in mitotic spindle regulation and coordination of mitotic processes. May have a preferential role in regulating neurogenesis. The protein is Abnormal spindle-like microcephaly-associated protein homolog (ASPM) of Bos taurus (Bovine).